A 586-amino-acid chain; its full sequence is MSPIENSDSAAWRELEAVRAEAAALRRQLADSPDRTRELEARIDSLTIRNTKLMDTLKEARQQLVALREEVDRLGQPPSGYGILIGVYDDQTVDVFTSGRKMRLTCSPNIDTSTLSYGQTVRLNEALTVVEANEYDAVGEIGTLREILDDGRRALVVGHADEERVVWLAGPLAKVAEEDDLDDPDSPVRKLRPGDSLLVDTKAGFAFERIPKAEVEDLVLEEVPDVDYSDIGGLGRQIEQIRDAVELPFLHKDLFREYELRPPKGVLLYGPPGCGKTLIAKAVANSLAKKIAEARGEDAKEAKSFFLNIKGPELLNKFVGETERHIRIIFQRAREKASEGTPVIVFFDEMDSIFRTRGSGVSSDVETTVVPQLLSEIDGVEGLENVIVIGASNREDMIDPAILRPGRLDVKIKIERPDAESAQDIFSKYLTEDLPLHADDLAEFGGDKAACVRAMIERVVDRMYAESEDNRFLEVTYANGDKEVLYFKDFNSGAMIQNIVDRAKKYAIKSVLETGSPGLRIQHLYDSIVDEFSENEDLPNTTNPDDWARISGKKGERIVYIRTLVTGKNASASRAIDTESNTGQYL.

Residues 11-76 adopt a coiled-coil conformation; the sequence is AWRELEAVRA…LREEVDRLGQ (66 aa). Position 273 to 278 (273 to 278) interacts with ATP; it reads GCGKTL. The tract at residues 585 to 586 is docks into pockets in the proteasome alpha-ring; sequence YL.

Belongs to the AAA ATPase family. In terms of assembly, homohexamer. Assembles into a hexameric ring structure that caps the 20S proteasome core. Strongly interacts with the prokaryotic ubiquitin-like protein Pup through a hydrophobic interface; the interacting region of ARC lies in its N-terminal coiled-coil domain. There is one Pup binding site per ARC hexamer ring. Upon ATP-binding, the C-terminus of ARC interacts with the alpha-rings of the proteasome core, possibly by binding to the intersubunit pockets.

Its pathway is protein degradation; proteasomal Pup-dependent pathway. In terms of biological role, ATPase which is responsible for recognizing, binding, unfolding and translocation of pupylated proteins into the bacterial 20S proteasome core particle. May be essential for opening the gate of the 20S proteasome via an interaction with its C-terminus, thereby allowing substrate entry and access to the site of proteolysis. Thus, the C-termini of the proteasomal ATPase may function like a 'key in a lock' to induce gate opening and therefore regulate proteolysis. The protein is Proteasome-associated ATPase of Nocardia farcinica (strain IFM 10152).